The primary structure comprises 889 residues: DNA mismatch repair protein MutS (889 aa).

ATP is bound at residue 641–648; the sequence is GPNMAGKS.

Belongs to the DNA mismatch repair MutS family.

Its function is as follows. This protein is involved in the repair of mismatches in DNA. It is possible that it carries out the mismatch recognition step. This protein has a weak ATPase activity. The protein is DNA mismatch repair protein MutS of Orientia tsutsugamushi (strain Ikeda) (Rickettsia tsutsugamushi).